The primary structure comprises 622 residues: MKNALINATTKKFEIIEKTVLPITWGLYWHNKFETWKYDAYDEKNVFCFGSGVLPVIGGHRLIFSFRSPLWDGFYFSSMGGAGYQFKSTGLNNVAIIGRCENPSILVIENDGQLRIDFIEVKEELKTVYEVSKYILELYKDKNLRSVVVGEAAKRTNMGGLFSQTVRNGKFVEGSEDWAARGGGGSVLYRAHNIMGIVFFGDEKEDKEEKEKAKKIIESYYKKPMSKVVLEHTKKYRYDEETKTGGTFGNNWLLYKEKVPIFNWRMPYIDKEDRKKILEKILKFYLEIFNKETIEPKRWANCGEPCPVLCKKYRNKNKVDYEPYASNGTLLGIFDLYEADRVVKTADALGFDAIEIGNLTAWVFELLDVGLLKEEELNIKKPIFDYKKITNDDDEEIREISKHNAEQAIKFMHNLAENSNDLYKILSLGKRKAAKILNERFKSRVNKIGKKFNDFAVYVPFGDWGEIAPNLYWTPGFFMPFVIQGRYLTYYKPEFNEPEKLAELVVESIKLELPIENLGICRFHRKWLKPVLKELVKELLGIEDIVEDSINLYREICEYNKKIGYPAKIESERVKDLIIAMAKEFGNEEWTKKFENKENVDEYVKRVLNKYSELLGIDWRIS.

Residues Cys302, Cys306, Cys310, and Cys521 each contribute to the [4Fe-4S] cluster site.

It belongs to the AOR/FOR family. [4Fe-4S] cluster serves as cofactor.

This is an uncharacterized protein from Methanocaldococcus jannaschii (strain ATCC 43067 / DSM 2661 / JAL-1 / JCM 10045 / NBRC 100440) (Methanococcus jannaschii).